A 749-amino-acid polypeptide reads, in one-letter code: Homeobox-leucine zipper protein ROC7 (749 aa).

The interval 26–98 (LDQHQQHQHQ…KKRYHRHTQH (73 aa)) is disordered. Residues 46 to 57 (SDGRAPRDELEM) show a composition bias toward basic and acidic residues. Residues 68 to 79 (SGGGGGGGGSGG) are compositionally biased toward gly residues. A compositionally biased stretch (basic residues) spans 86–97 (RPRKKRYHRHTQ). Residues 88–147 (RKKRYHRHTQHQIQELEAFFKECPHPDDKQRKELSRELGLEPLQVKFWFQNKRTQMKTQH) constitute a DNA-binding region (homeobox). A coiled-coil region spans residues 137–218 (QNKRTQMKTQ…DRISAIAAKY (82 aa)). Positions 256–494 (ADFDKPLVIE…LERQCERLAS (239 aa)) constitute an START domain.

This sequence belongs to the HD-ZIP homeobox family. Class IV subfamily.

It is found in the nucleus. Functionally, probable transcription factor. In Oryza sativa subsp. japonica (Rice), this protein is Homeobox-leucine zipper protein ROC7 (ROC7).